The primary structure comprises 1958 residues: Sodium channel protein type 10 subunit alpha (1958 aa).

At 1 to 125 (MEFPFGSVGT…FNLIRRTAIK (125 aa)) the chain is on the cytoplasmic side. Positions 27 to 54 (QIAAHRAAKKGRPKQRGQKDKSEKPRPQ) are disordered. Over residues 32–42 (RAAKKGRPKQR) the composition is skewed to basic residues. Over residues 43-54 (GQKDKSEKPRPQ) the composition is skewed to basic and acidic residues. One copy of the I repeat lies at 116 to 404 (FNLIRRTAIK…VTMAYEEQSQ (289 aa)). A helical transmembrane segment spans residues 126-149 (VSVHSWFSIFITVTILVNCVCMTR). The Extracellular segment spans residues 150–154 (TDLPE). Residues 155–174 (KLEYAFTVVYTFEALIKILA) form a helical membrane-spanning segment. The Cytoplasmic portion of the chain corresponds to 175-187 (RGFCLNEFTYLRD). A helical transmembrane segment spans residues 188–206 (PWNWLDFSVITLAYVGAAI). The Extracellular portion of the chain corresponds to 207–212 (DLRGIS). A helical; Voltage-sensor membrane pass occupies residues 213–232 (GLRTFRVLRALKTVSVIPGL). The Cytoplasmic portion of the chain corresponds to 233-248 (KVIVGALIHSVRKLAD). A helical transmembrane segment spans residues 249-272 (VTILTVFCLSVFALVGLQLFKGNL). Over 273–340 (KNKCIKNGTD…PDFNYTSFDS (68 aa)) the chain is Extracellular. Cysteine 276 and cysteine 318 are oxidised to a cystine. N-linked (GlcNAc...) asparagine glycans are attached at residues asparagine 279, asparagine 288, asparagine 311, and asparagine 334. Residues 341–365 (FAWAFLSLFRLMTQDSWERLYQQTL) constitute an intramembrane region (pore-forming). At 366 to 372 (RASGKMY) the chain is on the extracellular side. Residues 373–398 (MVFFVLVIFLGSFYLVNLILAVVTMA) traverse the membrane as a helical segment. The Cytoplasmic segment spans residues 399–658 (YEEQSQATIA…KWKKFKMVLF (260 aa)). Residues serine 440, serine 443, serine 466, and serine 478 each carry the phosphoserine modification. Disordered regions lie at residues 444-483 (HNGS…PYNQ) and 539-583 (GRGA…APEG). The segment covering 549-560 (PRSPLPQSPNPG) has biased composition (pro residues). Phosphoserine occurs at positions 611 and 614. One copy of the II repeat lies at 646–910 (CCPKWKKFKM…EDDGEVNNLQ (265 aa)). A helical transmembrane segment spans residues 659 to 683 (ELVTDPFAELTITLCIVVNTVFMAM). Residues 684 to 694 (EHYPMTDAFDA) are Extracellular-facing. Residues 695–718 (MLQAGNIVFTVFFTMEMAFKIIAF) form a helical membrane-spanning segment. The Cytoplasmic portion of the chain corresponds to 719-726 (DPYYYFQK). The chain crosses the membrane as a helical span at residues 727–746 (KWNIFDCVIVTVSLLELSTS). Over 747–752 (KKGSLS) the chain is Extracellular. Residues 753-772 (VLRTFRLLRVFKLAKSWPTL) traverse the membrane as a helical; Voltage-sensor segment. The Cytoplasmic portion of the chain corresponds to 773 to 788 (NMLIKIIGNSVGALGN). A helical transmembrane segment spans residues 789 to 809 (LTFILAIIVFIFALVGKQLLS). Residues 810 to 833 (ENYGCRRDGISVWNGERLRWHMCD) lie on the Extracellular side of the membrane. The segment at residues 834–854 (FFHSFLVVFRILCGEWIENMW) is an intramembrane region (pore-forming). The Extracellular portion of the chain corresponds to 855 to 863 (VCMEVSQDY). Cysteine 856 and cysteine 865 are disulfide-bonded. A helical membrane pass occupies residues 864–889 (ICLTLFLTVMVLGNLVVLNLFIALLL). Over 890–1148 (NSFSADNLTA…GWQVRKTCYR (259 aa)) the chain is Cytoplasmic. Residues 1006 to 1094 (DLDELEEDVE…SEGSTVDCPD (89 aa)) are disordered. Over residues 1017–1038 (ASQSSWQEESPKGQQELLQQVQ) the composition is skewed to polar residues. The stretch at 1141–1450 (QVRKTCYRIV…KKYYNAMKKL (310 aa)) is one III repeat. A helical transmembrane segment spans residues 1149 to 1172 (IVEHSWFESFIIFMILLSSGALAF). The Extracellular portion of the chain corresponds to 1173 to 1185 (EDNYLEEKPRVKS). The helical transmembrane segment at 1186-1211 (VLEYTDRVFTFIFVFEMLLKWVAYGF) threads the bilayer. Residues 1212–1217 (KKYFTN) lie on the Cytoplasmic side of the membrane. Residues 1218 to 1239 (AWCWLDFLIVNISLTSLIAKIL) form a helical membrane-spanning segment. The Extracellular segment spans residues 1240 to 1243 (EYSD). A helical; Voltage-sensor membrane pass occupies residues 1244-1265 (VASIKALRTLRALRPLRALSRF). The Cytoplasmic segment spans residues 1266 to 1284 (EGMRVVVDALVGAIPSIMN). Residues 1285–1312 (VLLVCLIFWLIFSIMGVNLFAGKFSRCV) form a helical membrane-spanning segment. The Extracellular portion of the chain corresponds to 1313 to 1354 (DTRSNPFSVVNSTFVTNKSDCYNQNNTGHFFWVNVKVNFDNV). Residues asparagine 1323, asparagine 1329, and asparagine 1337 are each glycosylated (N-linked (GlcNAc...) asparagine). The segment at residues 1355–1376 (AMGYLALLQVATFKGWMDIMYA) is an intramembrane region (pore-forming). The Extracellular segment spans residues 1377–1392 (AVDSRDINSQPNWEES). Residues 1393-1419 (LYMYLYFVVFIIFGGFFTLNLFVGVII) form a helical membrane-spanning segment. The Cytoplasmic portion of the chain corresponds to 1420 to 1472 (DNFNQQKKKLGGQDIFMTEEQKKYYNAMKKLGSKKPQKPIPRPLNKYQGFVFD). Serine 1452 is modified (phosphoserine; by PKC). One copy of the IV repeat lies at 1459–1758 (IPRPLNKYQG…WEKFDPEATQ (300 aa)). Residues 1473-1496 (IVTRQAFDIIIMALICLNMITMMV) form a helical membrane-spanning segment. At 1497 to 1507 (ETDNQSEEKTK) the chain is on the extracellular side. Residue asparagine 1500 is glycosylated (N-linked (GlcNAc...) asparagine). The helical transmembrane segment at 1508–1531 (VLGRINQFFVAVFTGECVMKMFAL) threads the bilayer. Over 1532–1537 (RQYYFT) the chain is Cytoplasmic. The helical transmembrane segment at 1538-1561 (NGWNVFDFIVVILSISSLLFSAIL) threads the bilayer. At 1562 to 1573 (SSLESYFSPTLL) the chain is on the extracellular side. A helical; Voltage-sensor membrane pass occupies residues 1574-1595 (RVIRLARIGRILRLIRAAKGIR). Over 1596 to 1610 (TLLFALMMSLPALFN) the chain is Cytoplasmic. The chain crosses the membrane as a helical span at residues 1611-1633 (IGLLLFLVMFIYSIFGMASFANV). Topologically, residues 1634 to 1647 (IDEAGIDDMFNFKT) are extracellular. An intramembrane region (pore-forming) is located at residues 1648-1670 (FGNSMLCLFQITTSAGWDGLLSP). Residues 1671–1698 (ILNTGPPYCDPNRPNSNGSKGNCGSPAV) are Extracellular-facing. The N-linked (GlcNAc...) asparagine glycan is linked to asparagine 1687. The chain crosses the membrane as a helical span at residues 1699–1723 (GILFFTTYIIISFLIVVNMYIAVIL). Topologically, residues 1724 to 1958 (ENFNVATEES…AKEGKSPGPQ (235 aa)) are cytoplasmic. Positions 1852 to 1881 (EDISATIIQKAYRNYMLQRSLMLSNPLHVP) constitute an IQ domain. The segment at 1901–1958 (NDNGGLPDKSETASATSFPPSYDSVTRGLSDRANISTSSSMQNEDEVTAKEGKSPGPQ) is disordered. Residues 1933-1942 (ANISTSSSMQ) are compositionally biased toward polar residues. Basic and acidic residues predominate over residues 1947–1958 (VTAKEGKSPGPQ).

This sequence belongs to the sodium channel (TC 1.A.1.10) family. Nav1.8/SCN10A subfamily. In terms of assembly, the channel consists of an ion conducting pore forming alpha-subunit regulated by one or more associated auxiliary subunits SCN1B, SCN2B and SCN3B; electrophysiological properties may vary depending on the type of the associated beta subunits. Found in a number of complexes with PRX, DYNLT1 and PDZD2. Interacts with proteins such as FSTL1, PRX, DYNLT1, PDZD2, S100A10 and many others. Interacts with NEDD4 and NEDD4L. Post-translationally, ubiquitinated by NEDD4L; which promotes its endocytosis. Phosphorylation at Ser-1452 by PKC in a highly conserved cytoplasmic loop slows inactivation of the sodium channel and reduces peak sodium currents. In terms of processing, lacks the cysteine which covalently binds the conotoxin GVIIJ. This cysteine (position 815) is speculated in other sodium channel subunits alpha to be implied in covalent binding with the sodium channel subunit beta-2 or beta-4. As to expression, expressed in dorsal root ganglion and trigeminal ganglion.

It localises to the cell membrane. It carries out the reaction Na(+)(in) = Na(+)(out). In terms of biological role, tetrodotoxin-resistant channel that mediates the voltage-dependent sodium ion permeability of excitable membranes. Assuming opened or closed conformations in response to the voltage difference across the membrane, the protein forms a sodium-selective channel through which sodium ions may pass in accordance with their electrochemical gradient. Plays a role in neuropathic pain mechanisms. This Mus musculus (Mouse) protein is Sodium channel protein type 10 subunit alpha.